A 218-amino-acid polypeptide reads, in one-letter code: Small ribosomal subunit protein uS3 (218 aa).

Residues Ile43–Ser113 enclose the KH type-2 domain.

It belongs to the universal ribosomal protein uS3 family. Part of the 30S ribosomal subunit. Forms a tight complex with proteins S10 and S14.

Functionally, binds the lower part of the 30S subunit head. Binds mRNA in the 70S ribosome, positioning it for translation. In Rubrobacter xylanophilus (strain DSM 9941 / JCM 11954 / NBRC 16129 / PRD-1), this protein is Small ribosomal subunit protein uS3.